A 298-amino-acid polypeptide reads, in one-letter code: Zinc-alpha-2-glycoprotein (298 aa).

The signal sequence occupies residues 1–20; it reads MVRMVPVLLSLLLLLGPAVP. Pyrrolidone carboxylic acid is present on glutamine 21. A glycan (N-linked (GlcNAc...) (complex) asparagine) is linked at asparagine 109. A glycan (N-linked (GlcNAc...) asparagine) is linked at asparagine 112. Disulfide bonds link cysteine 123–cysteine 186 and cysteine 225–cysteine 280. Asparagine 128 carries N-linked (GlcNAc...) (complex) asparagine glycosylation. The Ig-like C1-type domain maps to 207-292; it reads PSVVVTSHQA…QHSSLAQPLV (86 aa). N-linked (GlcNAc...) asparagine glycosylation is present at asparagine 259.

The protein belongs to the MHC class I family. In terms of assembly, interacts with PIP. In terms of processing, N-glycosylated. N-glycan at Asn-128: Hex5HexNAc4. In terms of tissue distribution, blood plasma, seminal plasma, urine, saliva, sweat, epithelial cells of various human glands, liver.

It is found in the secreted. Stimulates lipid degradation in adipocytes and causes the extensive fat losses associated with some advanced cancers. May bind polyunsaturated fatty acids. The polypeptide is Zinc-alpha-2-glycoprotein (AZGP1) (Homo sapiens (Human)).